The sequence spans 421 residues: 4-hydroxy-3-methylbut-2-en-1-yl diphosphate synthase (flavodoxin) (421 aa).

Positions 311, 314, 357, and 364 each coordinate [4Fe-4S] cluster.

Belongs to the IspG family. Requires [4Fe-4S] cluster as cofactor.

It carries out the reaction (2E)-4-hydroxy-3-methylbut-2-enyl diphosphate + oxidized [flavodoxin] + H2O + 2 H(+) = 2-C-methyl-D-erythritol 2,4-cyclic diphosphate + reduced [flavodoxin]. It functions in the pathway isoprenoid biosynthesis; isopentenyl diphosphate biosynthesis via DXP pathway; isopentenyl diphosphate from 1-deoxy-D-xylulose 5-phosphate: step 5/6. In terms of biological role, converts 2C-methyl-D-erythritol 2,4-cyclodiphosphate (ME-2,4cPP) into 1-hydroxy-2-methyl-2-(E)-butenyl 4-diphosphate. In Xanthomonas oryzae pv. oryzae (strain MAFF 311018), this protein is 4-hydroxy-3-methylbut-2-en-1-yl diphosphate synthase (flavodoxin).